The chain runs to 127 residues: Glycine cleavage system H protein (127 aa).

Residues 24–105 (TLTIGITDLA…AYDAWLFKIK (82 aa)) enclose the Lipoyl-binding domain. The residue at position 65 (Lys65) is an N6-lipoyllysine.

It belongs to the GcvH family. As to quaternary structure, the glycine cleavage system is composed of four proteins: P, T, L and H. (R)-lipoate is required as a cofactor.

Functionally, the glycine cleavage system catalyzes the degradation of glycine. The H protein shuttles the methylamine group of glycine from the P protein to the T protein. The sequence is that of Glycine cleavage system H protein from Ralstonia nicotianae (strain ATCC BAA-1114 / GMI1000) (Ralstonia solanacearum).